A 454-amino-acid chain; its full sequence is Bifunctional protein GlmU (454 aa).

The tract at residues 1-228 is pyrophosphorylase; that stretch reads MSLKVIILAA…EMEVLGVNNK (228 aa). UDP-N-acetyl-alpha-D-glucosamine-binding positions include 8 to 11, Lys22, Gln73, 78 to 79, 100 to 102, Gly138, Glu153, Asn168, and Asn226; these read LAAG, GT, and YGD. Residue Asp102 coordinates Mg(2+). Position 226 (Asn226) interacts with Mg(2+). Residues 229–249 are linker; the sequence is SQLQSLERQYQAQLAEELMEQ. The tract at residues 250–454 is N-acetyltransferase; the sequence is GVTVLDASRI…IKGWQKPTKN (205 aa). Positions 332 and 350 each coordinate UDP-N-acetyl-alpha-D-glucosamine. Residue His362 is the Proton acceptor of the active site. 2 residues coordinate UDP-N-acetyl-alpha-D-glucosamine: Tyr365 and Asn376. Acetyl-CoA contacts are provided by residues Ala379, 385–386, Ser404, Ala422, and Arg439; that span reads NY.

It in the N-terminal section; belongs to the N-acetylglucosamine-1-phosphate uridyltransferase family. In the C-terminal section; belongs to the transferase hexapeptide repeat family. In terms of assembly, homotrimer. Mg(2+) is required as a cofactor.

Its subcellular location is the cytoplasm. The enzyme catalyses alpha-D-glucosamine 1-phosphate + acetyl-CoA = N-acetyl-alpha-D-glucosamine 1-phosphate + CoA + H(+). The catalysed reaction is N-acetyl-alpha-D-glucosamine 1-phosphate + UTP + H(+) = UDP-N-acetyl-alpha-D-glucosamine + diphosphate. It participates in nucleotide-sugar biosynthesis; UDP-N-acetyl-alpha-D-glucosamine biosynthesis; N-acetyl-alpha-D-glucosamine 1-phosphate from alpha-D-glucosamine 6-phosphate (route II): step 2/2. It functions in the pathway nucleotide-sugar biosynthesis; UDP-N-acetyl-alpha-D-glucosamine biosynthesis; UDP-N-acetyl-alpha-D-glucosamine from N-acetyl-alpha-D-glucosamine 1-phosphate: step 1/1. The protein operates within bacterial outer membrane biogenesis; LPS lipid A biosynthesis. In terms of biological role, catalyzes the last two sequential reactions in the de novo biosynthetic pathway for UDP-N-acetylglucosamine (UDP-GlcNAc). The C-terminal domain catalyzes the transfer of acetyl group from acetyl coenzyme A to glucosamine-1-phosphate (GlcN-1-P) to produce N-acetylglucosamine-1-phosphate (GlcNAc-1-P), which is converted into UDP-GlcNAc by the transfer of uridine 5-monophosphate (from uridine 5-triphosphate), a reaction catalyzed by the N-terminal domain. The chain is Bifunctional protein GlmU from Hydrogenovibrio crunogenus (strain DSM 25203 / XCL-2) (Thiomicrospira crunogena).